The sequence spans 130 residues: Small ribosomal subunit protein uS9 (130 aa).

Belongs to the universal ribosomal protein uS9 family.

This chain is Small ribosomal subunit protein uS9, found in Clostridium beijerinckii (strain ATCC 51743 / NCIMB 8052) (Clostridium acetobutylicum).